Here is a 315-residue protein sequence, read N- to C-terminus: GTP cyclohydrolase MptA (315 aa).

Belongs to the GTP cyclohydrolase IV family. Homodimer. The cofactor is Fe(2+).

The catalysed reaction is GTP + H2O = 7,8-dihydroneopterin 2',3'-cyclic phosphate + formate + diphosphate + H(+). The protein operates within cofactor biosynthesis; 5,6,7,8-tetrahydromethanopterin biosynthesis. Functionally, converts GTP to 7,8-dihydro-D-neopterin 2',3'-cyclic phosphate, the first intermediate in the biosynthesis of coenzyme methanopterin. This chain is GTP cyclohydrolase MptA, found in Methanococcus maripaludis (strain C7 / ATCC BAA-1331).